The chain runs to 71 residues: uncharacterized protein (71 aa).

Positions 15-71 constitute a Sm domain; it reads PNFEYARRLNGKKVKIFLRNGEVLDAEVTGVSNYEIMVKVGDRNLLVFKHAIDYIEY.

This is an uncharacterized protein from Methanocaldococcus jannaschii (strain ATCC 43067 / DSM 2661 / JAL-1 / JCM 10045 / NBRC 100440) (Methanococcus jannaschii).